The chain runs to 264 residues: 3-methyl-2-oxobutanoate hydroxymethyltransferase (264 aa).

Asp-45 and Asp-84 together coordinate Mg(2+). 3-methyl-2-oxobutanoate contacts are provided by residues 45-46, Asp-84, and Lys-112; that span reads DS. Residue Glu-114 coordinates Mg(2+). The active-site Proton acceptor is the Glu-181.

This sequence belongs to the PanB family. Homodecamer; pentamer of dimers. It depends on Mg(2+) as a cofactor.

It localises to the cytoplasm. It catalyses the reaction 3-methyl-2-oxobutanoate + (6R)-5,10-methylene-5,6,7,8-tetrahydrofolate + H2O = 2-dehydropantoate + (6S)-5,6,7,8-tetrahydrofolate. It participates in cofactor biosynthesis; (R)-pantothenate biosynthesis; (R)-pantoate from 3-methyl-2-oxobutanoate: step 1/2. Catalyzes the reversible reaction in which hydroxymethyl group from 5,10-methylenetetrahydrofolate is transferred onto alpha-ketoisovalerate to form ketopantoate. In Escherichia coli O8 (strain IAI1), this protein is 3-methyl-2-oxobutanoate hydroxymethyltransferase.